A 191-amino-acid polypeptide reads, in one-letter code: Protein YceI (191 aa).

Positions 1–22 (MKKSLLGLTFASLMFSAGSAVA) are cleaved as a signal peptide.

Belongs to the UPF0312 family. Type 1 subfamily.

Its subcellular location is the periplasm. This is Protein YceI from Escherichia coli O6:H1 (strain CFT073 / ATCC 700928 / UPEC).